The chain runs to 393 residues: Staphopain B (393 aa).

An N-terminal signal peptide occupies residues 1-36 (MNSSCKTRVFNIISIIMVSMLILSLGAFANNNKAKA). Residues 37–219 (DSHSKQLEIN…KVEENEAIQE (183 aa)) constitute a propeptide that is removed on maturation. Catalysis depends on residues cysteine 243, histidine 340, and asparagine 360.

It belongs to the peptidase C47 family. In the cytoplasm, prematurely activated/folded SspB forms a stable non-covalent complex with SspC. In terms of processing, proteolytically cleaved by staphylococcal serine protease (SspA).

The protein localises to the secreted. Its activity is regulated as follows. Prematurely activated/folded staphopain B is inhibited by staphostatin B (SspC), which is probably required to protect staphylococcal cytoplasmic proteins from degradation by SspB. Its function is as follows. Cysteine protease that plays an important role in the inhibition of host innate immune response. Degrades host elastin, fibrogen, fibronectin and kininogen. Blocks phagocytosis of opsonised S.aureus by neutrophils and monocytes by inducing their death in a proteolytic activity-dependent manner. Decreases surface expression of the 'don't eat me' signal CD31 on neutrophils. Cleaves host galectin-3/LGALS3, thereby inhibiting the neutrophil-activating ability of the lectin. In Staphylococcus aureus, this protein is Staphopain B (sspB).